Reading from the N-terminus, the 183-residue chain is Small ribosomal subunit protein uS4c (183 aa).

The region spanning 82–143 (MRLDNILFRL…KQRSKALIQN (62 aa)) is the S4 RNA-binding domain.

It belongs to the universal ribosomal protein uS4 family. Part of the 30S ribosomal subunit. Contacts protein S5. The interaction surface between S4 and S5 is involved in control of translational fidelity.

The protein localises to the plastid. Its subcellular location is the chloroplast. In terms of biological role, one of the primary rRNA binding proteins, it binds directly to 16S rRNA where it nucleates assembly of the body of the 30S subunit. Its function is as follows. With S5 and S12 plays an important role in translational accuracy. The sequence is that of Small ribosomal subunit protein uS4c (rps4) from Crocosmia sp. (strain Porto Alegre 034).